A 484-amino-acid polypeptide reads, in one-letter code: tRNA sulfurtransferase (484 aa).

The region spanning 63 to 167 (EAFAERLACI…NDNLYLIDKR (105 aa)) is the THUMP domain. ATP is bound by residues 185–186 (LI), lysine 267, glycine 289, and glutamine 298. A disulfide bridge links cysteine 346 with cysteine 458. One can recognise a Rhodanese domain in the interval 406 to 484 (ISAGEIIIDV…GYNNVKVYRP (79 aa)). The active-site Cysteine persulfide intermediate is cysteine 458.

The protein belongs to the ThiI family.

It is found in the cytoplasm. It carries out the reaction [ThiI sulfur-carrier protein]-S-sulfanyl-L-cysteine + a uridine in tRNA + 2 reduced [2Fe-2S]-[ferredoxin] + ATP + H(+) = [ThiI sulfur-carrier protein]-L-cysteine + a 4-thiouridine in tRNA + 2 oxidized [2Fe-2S]-[ferredoxin] + AMP + diphosphate. The catalysed reaction is [ThiS sulfur-carrier protein]-C-terminal Gly-Gly-AMP + S-sulfanyl-L-cysteinyl-[cysteine desulfurase] + AH2 = [ThiS sulfur-carrier protein]-C-terminal-Gly-aminoethanethioate + L-cysteinyl-[cysteine desulfurase] + A + AMP + 2 H(+). The protein operates within cofactor biosynthesis; thiamine diphosphate biosynthesis. Functionally, catalyzes the ATP-dependent transfer of a sulfur to tRNA to produce 4-thiouridine in position 8 of tRNAs, which functions as a near-UV photosensor. Also catalyzes the transfer of sulfur to the sulfur carrier protein ThiS, forming ThiS-thiocarboxylate. This is a step in the synthesis of thiazole, in the thiamine biosynthesis pathway. The sulfur is donated as persulfide by IscS. The polypeptide is tRNA sulfurtransferase (Shewanella pealeana (strain ATCC 700345 / ANG-SQ1)).